We begin with the raw amino-acid sequence, 318 residues long: Acetyl-coenzyme A carboxylase carboxyl transferase subunit alpha (318 aa).

Residues 32-293 (NLSDELERLR…KERLVSQLDR (262 aa)) enclose the CoA carboxyltransferase C-terminal domain.

It belongs to the AccA family. Acetyl-CoA carboxylase is a heterohexamer composed of biotin carboxyl carrier protein (AccB), biotin carboxylase (AccC) and two subunits each of ACCase subunit alpha (AccA) and ACCase subunit beta (AccD).

The protein localises to the cytoplasm. It catalyses the reaction N(6)-carboxybiotinyl-L-lysyl-[protein] + acetyl-CoA = N(6)-biotinyl-L-lysyl-[protein] + malonyl-CoA. It functions in the pathway lipid metabolism; malonyl-CoA biosynthesis; malonyl-CoA from acetyl-CoA: step 1/1. Its function is as follows. Component of the acetyl coenzyme A carboxylase (ACC) complex. First, biotin carboxylase catalyzes the carboxylation of biotin on its carrier protein (BCCP) and then the CO(2) group is transferred by the carboxyltransferase to acetyl-CoA to form malonyl-CoA. This chain is Acetyl-coenzyme A carboxylase carboxyl transferase subunit alpha, found in Saccharophagus degradans (strain 2-40 / ATCC 43961 / DSM 17024).